The chain runs to 310 residues: Small ribosomal subunit protein uS2 (310 aa).

Positions W249–A272 are enriched in basic and acidic residues. The interval W249 to A310 is disordered. A compositionally biased stretch (low complexity) spans E273 to A310.

It belongs to the universal ribosomal protein uS2 family.

The sequence is that of Small ribosomal subunit protein uS2 (rpsB) from Streptomyces coelicolor (strain ATCC BAA-471 / A3(2) / M145).